The following is a 430-amino-acid chain: MKQALRVAFGFLILWASVLHAEVRIVIDSGVDSGRPIGVVPFQWVGPGAAPEDIGGIVAADLRNSGKFNPLDRARLPQQPGSAQEVQPAAWSALGIDAVVVGQVTPNPDGSYNVAYQLVDTGGAPGTVLAQNSYKVNKQWLRYAGHTASDEVFEKLTGIKGAFRTRIAYVVQTNGGQFPYELRVSDYDGYNQFVVHRSPQPLMSPAWSPDGSKLAYVTFESGRSALVIQTLANGAVRQVASFPRHNGAPAFSPDGSKLAFALSKTGSLNLYVMDLASGQIRQVTDGRSNNTEPTWFPDSQNLAFTSDQAGRPQVYKVNINGGAPQRITWEGSQNQDADVSSDGKFMVMVSSNGGQQHIAKQDLATGGVQVLSSTFLDETPSLAPNGTMVIYSSSQGMGSVLNLVSTDGRFKARLPATDGQVKFPAWSPYL.

A signal peptide spans 1-21 (MKQALRVAFGFLILWASVLHA).

Belongs to the TolB family. As to quaternary structure, the Tol-Pal system is composed of five core proteins: the inner membrane proteins TolA, TolQ and TolR, the periplasmic protein TolB and the outer membrane protein Pal. They form a network linking the inner and outer membranes and the peptidoglycan layer.

It localises to the periplasm. Part of the Tol-Pal system, which plays a role in outer membrane invagination during cell division and is important for maintaining outer membrane integrity. TolB occupies a key intermediary position in the Tol-Pal system because it communicates directly with both membrane-embedded components, Pal in the outer membrane and TolA in the inner membrane. This is Tol-Pal system protein TolB from Escherichia coli O8 (strain IAI1).